A 362-amino-acid chain; its full sequence is Peptide chain release factor 1 (362 aa).

At glutamine 236 the chain carries N5-methylglutamine.

It belongs to the prokaryotic/mitochondrial release factor family. Post-translationally, methylated by PrmC. Methylation increases the termination efficiency of RF1.

The protein resides in the cytoplasm. Peptide chain release factor 1 directs the termination of translation in response to the peptide chain termination codons UAG and UAA. The sequence is that of Peptide chain release factor 1 from Lactobacillus gasseri (strain ATCC 33323 / DSM 20243 / BCRC 14619 / CIP 102991 / JCM 1131 / KCTC 3163 / NCIMB 11718 / NCTC 13722 / AM63).